A 506-amino-acid chain; its full sequence is UDP-N-acetylmuramoyl-L-alanyl-D-glutamate--2,6-diaminopimelate ligase (506 aa).

Serine 42 is a UDP-N-acetyl-alpha-D-muramoyl-L-alanyl-D-glutamate binding site. Residue 125-131 (GTSGKTT) coordinates ATP. UDP-N-acetyl-alpha-D-muramoyl-L-alanyl-D-glutamate is bound by residues 166 to 167 (TT), serine 193, and arginine 201. Lysine 233 is subject to N6-carboxylysine. Residues arginine 395, 419–422 (DNPR), glycine 475, and glutamate 479 contribute to the meso-2,6-diaminopimelate site. The Meso-diaminopimelate recognition motif signature appears at 419 to 422 (DNPR).

It belongs to the MurCDEF family. MurE subfamily. Mg(2+) is required as a cofactor. In terms of processing, carboxylation is probably crucial for Mg(2+) binding and, consequently, for the gamma-phosphate positioning of ATP.

The protein localises to the cytoplasm. It catalyses the reaction UDP-N-acetyl-alpha-D-muramoyl-L-alanyl-D-glutamate + meso-2,6-diaminopimelate + ATP = UDP-N-acetyl-alpha-D-muramoyl-L-alanyl-gamma-D-glutamyl-meso-2,6-diaminopimelate + ADP + phosphate + H(+). It participates in cell wall biogenesis; peptidoglycan biosynthesis. In terms of biological role, catalyzes the addition of meso-diaminopimelic acid to the nucleotide precursor UDP-N-acetylmuramoyl-L-alanyl-D-glutamate (UMAG) in the biosynthesis of bacterial cell-wall peptidoglycan. The sequence is that of UDP-N-acetylmuramoyl-L-alanyl-D-glutamate--2,6-diaminopimelate ligase from Streptomyces avermitilis (strain ATCC 31267 / DSM 46492 / JCM 5070 / NBRC 14893 / NCIMB 12804 / NRRL 8165 / MA-4680).